Reading from the N-terminus, the 1735-residue chain is Glutamine and serine-rich protein 1 (1735 aa).

An N-acetylmethionine modification is found at M1. The span at 267–297 (AIPSSGYPPSTTKIKSCSTEQPLTSTKTPKP) shows a compositional bias: polar residues. Disordered regions lie at residues 267–301 (AIPSSGYPPSTTKIKSCSTEQPLTSTKTPKPQSII), 414–440 (TRDLSSVSQSQSYSSGHSQGLSPVSQT), 479–518 (SRAQNLPDSSPTQNYISMHSSQNVQTQESSSPQSQKFLPA), and 533–561 (LQNNITSPDPKSYAERKLDSDVYPSSKQE). The span at 417–440 (LSSVSQSQSYSSGHSQGLSPVSQT) shows a compositional bias: low complexity. A phosphoserine mark is found at S586, S615, and S886. A Phosphothreonine modification is found at T949. The interval 964–1033 (GPSHEVQEQS…EFTLGGDDSG (70 aa)) is disordered. The span at 971–985 (EQSSGPFKKQSATNL) shows a compositional bias: polar residues. A Phosphoserine modification is found at S987. Polar residues predominate over residues 997 to 1024 (STLNNNRNQEFVSSSRSISGENATSESE). Residues K1058 and K1083 each participate in a glycyl lysine isopeptide (Lys-Gly) (interchain with G-Cter in SUMO2) cross-link. 2 disordered regions span residues 1073-1132 (KKRA…EKMR) and 1178-1217 (RPGTQMVRTFCPPPLPKPSSTTPTPLVSETGGNSPSDKVD). The span at 1120–1132 (SCHDGYQHQEKMR) shows a compositional bias: basic and acidic residues. 4 positions are modified to phosphoserine: S1211, S1230, S1231, and S1239. The interval 1256–1286 (TSDKKKKTEALQVATTSPTANTTGTATTSST) is disordered. Residues 1269 to 1286 (ATTSPTANTTGTATTSST) show a composition bias toward low complexity. The residue at position 1341 (T1341) is a Phosphothreonine. Residue S1348 is modified to Phosphoserine. The segment at 1441-1532 (VCSKKPRNKP…SSDDEEFEPP (92 aa)) is disordered. A compositionally biased stretch (polar residues) spans 1449–1478 (KPSQTIRTVQAKPSSSSKTSDPLASKTTTT). Over residues 1492–1508 (VKAEPPPKKRKKWKEEF) the composition is skewed to basic and acidic residues.

As to quaternary structure, interacts with TET1.

The protein localises to the chromosome. Plays an essential role in the protection and maintenance of transcriptional and developmental programs. Protects many bivalent promoters and poised enhancers from hypermethylation, showing a marked preference for these regulatory elements over other types of promoters or enhancers. Mechanistically, cooperates with TET1 and binds to DNA in a common complex to inhibit the binding of DNMT3A/3B and therefore de novo methylation. The sequence is that of Glutamine and serine-rich protein 1 (QSER1) from Homo sapiens (Human).